Consider the following 174-residue polypeptide: Gamma-crystallin C (174 aa).

2 Beta/gamma crystallin 'Greek key' domains span residues 2–40 and 41–83; these read GKIT…RVDS and GCWM…CLIP. The residue at position 23 (cysteine 23) is an S-methylcysteine. A connecting peptide region spans residues 84–87; that stretch reads QTSS. Beta/gamma crystallin 'Greek key' domains follow at residues 88-128 and 129-171; these read HRLR…HVLE and GCWV…RRVV.

It belongs to the beta/gamma-crystallin family. As to quaternary structure, monomer.

Functionally, crystallins are the dominant structural components of the vertebrate eye lens. In Canis lupus familiaris (Dog), this protein is Gamma-crystallin C (CRYGC).